Consider the following 473-residue polypeptide: UDP-N-acetylmuramate--L-alanine ligase (473 aa).

123–129 (GTHGKTT) lines the ATP pocket.

It belongs to the MurCDEF family.

The protein localises to the cytoplasm. It catalyses the reaction UDP-N-acetyl-alpha-D-muramate + L-alanine + ATP = UDP-N-acetyl-alpha-D-muramoyl-L-alanine + ADP + phosphate + H(+). The protein operates within cell wall biogenesis; peptidoglycan biosynthesis. Functionally, cell wall formation. This chain is UDP-N-acetylmuramate--L-alanine ligase, found in Marinomonas sp. (strain MWYL1).